The primary structure comprises 436 residues: Enolase (436 aa).

Residue Gln163 participates in (2R)-2-phosphoglycerate binding. Residue Glu205 is the Proton donor of the active site. Residues Asp242, Glu285, and Asp312 each coordinate Mg(2+). (2R)-2-phosphoglycerate is bound by residues Lys337, Arg366, Ser367, and Lys388. The Proton acceptor role is filled by Lys337.

It belongs to the enolase family. It depends on Mg(2+) as a cofactor.

It is found in the cytoplasm. Its subcellular location is the secreted. The protein localises to the cell surface. The enzyme catalyses (2R)-2-phosphoglycerate = phosphoenolpyruvate + H2O. Its pathway is carbohydrate degradation; glycolysis; pyruvate from D-glyceraldehyde 3-phosphate: step 4/5. Its function is as follows. Catalyzes the reversible conversion of 2-phosphoglycerate (2-PG) into phosphoenolpyruvate (PEP). It is essential for the degradation of carbohydrates via glycolysis. This is Enolase from Solidesulfovibrio magneticus (strain ATCC 700980 / DSM 13731 / RS-1) (Desulfovibrio magneticus).